We begin with the raw amino-acid sequence, 176 residues long: Variant surface antigen A (176 aa).

A signal peptide spans 1–29; sequence MKKSIFSKKLLVSFGSLVALAAIPLIAIS. A lipid anchor (N-palmitoyl cysteine) is attached at cysteine 30. Cysteine 30 carries the S-diacylglycerol cysteine lipid modification. The disordered stretch occupies residues 33–176; the sequence is TDNNSSQSQQ…TKTENTQHTS (144 aa). Over residues 35–121 the composition is skewed to low complexity; the sequence is NNSSQSQQPG…GSNSESGMNS (87 aa). Repeat unit 1 spans residues 123-135; sequence KTENTQQSEAPGT. The 2.5 X 13 AA repeats stretch occupies residues 123–176; sequence KTENTQQSEAPGTNTGNKTTSESNSESGMNSEKTENTQQSEAPGTKTENTQHTS. The segment covering 126–142 has biased composition (polar residues); that stretch reads NTQQSEAPGTNTGNKTT. Positions 143-153 are enriched in low complexity; the sequence is SESNSESGMNS. Residues 155–167 form repeat 2; it reads KTENTQQSEAPGT. Positions 158–176 are enriched in polar residues; the sequence is NTQQSEAPGTKTENTQHTS. The stretch at 168-176 is one 3; truncated repeat; that stretch reads KTENTQHTS.

The protein localises to the cell membrane. In terms of biological role, responsible for the antigenic diversity for host adaptation. The protein is Variant surface antigen A (vlpA) of Mesomycoplasma hyorhinis (Mycoplasma hyorhinis).